A 356-amino-acid polypeptide reads, in one-letter code: MGSCQSNENSEGNARNKEIEKQLNADKRAGSSIVKLLLLGAGECGKSTVLKQMQILHSNGFTEEEVNEKRAIVYNNTVSAMCTILRAMDGVLHLPLENGQKEAEKAIVMKVQENGEEGEALTEEVSKAIQSLWADPGVKKAFEMRSEYQLPDSAKYFLDNCQRISEPGYRPNDQDILYSRVATTGVVEVKFKIKELDFRVFDVGGQRSERRKWIHCFDNVESIIFITAISEYDQVLFEDETTNRMIESMQLFNSICNSTWFLSTAMILFMNKKDLFMEKIQRVNITTAFPDYEGGQNYEEAVSFIKQKFAELNLNPDKKTIYMHETCATDTNQVQLVISSVIDTIIQKNLQKAGMM.

Glycine 2 carries the N-myristoyl glycine lipid modification. Cysteine 4 carries the S-palmitoyl cysteine lipid modification. The G-alpha domain occupies serine 32–methionine 356. The G1 motif stretch occupies residues lysine 35 to threonine 48. GTP-binding positions include glycine 40–serine 47, leucine 177–threonine 183, aspartate 202–glutamine 206, asparagine 271–aspartate 274, and alanine 328. Positions 47 and 183 each coordinate Mg(2+). The G2 motif stretch occupies residues aspartate 175–threonine 183. The segment at phenylalanine 198–arginine 207 is G3 motif. Positions isoleucine 267–aspartate 274 are G4 motif. A G5 motif region spans residues threonine 326 to threonine 331.

The protein belongs to the G-alpha family. As to quaternary structure, g proteins are composed of 3 units; alpha, beta and gamma. The alpha chain contains the guanine nucleotide binding site. As to expression, expressed in sensory neurons in the head and tail. Expressed in amphid AWC neurons, to a lesser extent in AWB and weakly in AWA, ASH and ADF neurons (head sensory neurons). Expressed in phasmid PHA and PHB neurons (tail sensory neurons).

Its subcellular location is the cell projection. The protein localises to the cilium. It localises to the dendrite. Functionally, guanine nucleotide-binding proteins (G proteins) are involved as modulators or transducers in various transmembrane signaling systems. This specific G-alpha subunit plays an important role in olfaction and in cilia morphogenesis. Involved in chemotactic responses to attractants diacetyl, pyrazine, 2,4,5-trimethylthiazole, benzaldehyde, isoamyl alcohol, butanone and 2,3-pentanedione. Displays a redundant function with gpa-3 in chemotactic responses. Plays a role in the avoidance response to the noxious chemical quinine in ASH sensory neurons. Involved in avoidance responses to copper, sodium dodecyl sulfate and linoleic acid. Involved in osmotic avoidance and mechanosensory responses. Involved in specifying fan-like morphology of cilia of head sensory neurons AWC. Plays a role in the detection of preferred food sources by mediating the recognition of food odors in olfactory sensory neurons. This chain is Guanine nucleotide-binding protein alpha-17 subunit, found in Caenorhabditis elegans.